The chain runs to 218 residues: Probable GTP-binding protein EngB (218 aa).

The EngB-type G domain occupies aspartate 44–threonine 218. GTP contacts are provided by residues glycine 52–serine 59, glycine 79–glutamate 83, aspartate 97–glycine 100, threonine 164–aspartate 167, and threonine 198–serine 200. Positions 59 and 81 each coordinate Mg(2+).

Belongs to the TRAFAC class TrmE-Era-EngA-EngB-Septin-like GTPase superfamily. EngB GTPase family. Mg(2+) serves as cofactor.

Necessary for normal cell division and for the maintenance of normal septation. The sequence is that of Probable GTP-binding protein EngB from Jannaschia sp. (strain CCS1).